An 852-amino-acid polypeptide reads, in one-letter code: Protein mono-ADP-ribosyltransferase PARP8 (852 aa).

2 disordered regions span residues 113-134 and 289-310; these read NGEE…NDSE and SPSY…EQDG. Positions 123-134 are enriched in acidic residues; the sequence is VEEDSEGDNDSE. 4 positions are modified to ADP-ribosylcysteine: Cys332, Cys366, Cys375, and Cys394. The 228-residue stretch at 615–842 folds into the PARP catalytic domain; it reads EMTQAPYLEI…QEGGIHKEIL (228 aa). Residues 748 to 775 form a disordered region; sequence QKVSSKDEPASSSKSSNASQSQKKGQQS. Over residues 757-775 the composition is skewed to low complexity; sequence ASSSKSSNASQSQKKGQQS.

It belongs to the ARTD/PARP family. In terms of processing, auto-mono-ADP-ribosylated.

It carries out the reaction L-cysteinyl-[protein] + NAD(+) = S-(ADP-D-ribosyl)-L-cysteinyl-[protein] + nicotinamide + H(+). Its function is as follows. Mono-ADP-ribosyltransferase that mediates mono-ADP-ribosylation of target proteins. This Mus musculus (Mouse) protein is Protein mono-ADP-ribosyltransferase PARP8.